The primary structure comprises 201 residues: 2-phospho-L-lactate guanylyltransferase (201 aa).

The protein belongs to the CofC family. In terms of assembly, homodimer.

It catalyses the reaction (2S)-2-phospholactate + GTP + H(+) = (2S)-lactyl-2-diphospho-5'-guanosine + diphosphate. Its pathway is cofactor biosynthesis; coenzyme F420 biosynthesis. Its function is as follows. Guanylyltransferase that catalyzes the activation of (2S)-2-phospholactate (2-PL) as (2S)-lactyl-2-diphospho-5'-guanosine, via the condensation of 2-PL with GTP. It is involved in the biosynthesis of coenzyme F420, a hydride carrier cofactor. This chain is 2-phospho-L-lactate guanylyltransferase, found in Natronomonas pharaonis (strain ATCC 35678 / DSM 2160 / CIP 103997 / JCM 8858 / NBRC 14720 / NCIMB 2260 / Gabara) (Halobacterium pharaonis).